Here is a 100-residue protein sequence, read N- to C-terminus: Small ribosomal subunit protein uS14 (100 aa).

It belongs to the universal ribosomal protein uS14 family. Part of the 30S ribosomal subunit. Contacts proteins S3 and S10.

Its function is as follows. Binds 16S rRNA, required for the assembly of 30S particles and may also be responsible for determining the conformation of the 16S rRNA at the A site. In Acaryochloris marina (strain MBIC 11017), this protein is Small ribosomal subunit protein uS14.